The primary structure comprises 323 residues: tRNA uridine(34) hydroxylase (323 aa).

Positions 123 to 217 (SDPDVVVIDT…YLETIPEEES (95 aa)) constitute a Rhodanese domain. Cysteine 177 functions as the Cysteine persulfide intermediate in the catalytic mechanism.

The protein belongs to the TrhO family.

It carries out the reaction uridine(34) in tRNA + AH2 + O2 = 5-hydroxyuridine(34) in tRNA + A + H2O. Catalyzes oxygen-dependent 5-hydroxyuridine (ho5U) modification at position 34 in tRNAs. This chain is tRNA uridine(34) hydroxylase, found in Methylobacillus flagellatus (strain ATCC 51484 / DSM 6875 / VKM B-1610 / KT).